Reading from the N-terminus, the 7481-residue chain is Polyketide synthase GfsA (7481 aa).

The segment at 24–1020 (ASDEPIAVIG…ETAEFVRARL (997 aa)) is loading module (LM). Residues 26–451 (DEPIAVIGLS…GTNCHVVVSA (426 aa)) form the Ketosynthase family 3 (KS3) 1 domain. The tract at residues 60-80 (RVPADRETPPSTEEESADGEA) is disordered. Gln197 acts as the For decarboxylation activity of LM in catalysis. Ser662 functions as the For acyltransferase activity of LM in the catalytic mechanism. The 76-residue stretch at 945–1020 (PDPVETVRQL…ETAEFVRARL (76 aa)) folds into the Carrier 1 domain. At Ser980 the chain carries O-(pantetheine 4'-phosphoryl)serine. In terms of domain architecture, Ketosynthase family 3 (KS3) 2 spans 1038–1454 (DEPIAVVAMS…GTNAHVILEQ (417 aa)). Module regions lie at residues 1038 to 2517 (DEPI…AGEL), 2538 to 4063 (EDPI…LQRI), 4084 to 5636 (DDPI…GSEV), and 5655 to 7400 (DEPV…GEQL). Residues Cys1201, His1336, and His1376 each act as for beta-ketoacyl synthase 1 activity in the active site. In terms of domain architecture, Carrier 2 spans 2442–2517 (RVLLDLVRGR…ALAEHLAGEL (76 aa)). The residue at position 2477 (Ser2477) is an O-(pantetheine 4'-phosphoryl)serine. The region spanning 2538–2964 (EDPIAIVAMS…GTNAHVIIEE (427 aa)) is the Ketosynthase family 3 (KS3) 3 domain. Residues Cys2711, His2846, and His2886 each act as for beta-ketoacyl synthase 2 activity in the active site. The Carrier 3 domain maps to 3988–4063 (QALQDLVLTE…ATTEYLLQRI (76 aa)). Position 4023 is an O-(pantetheine 4'-phosphoryl)serine (Ser4023). In terms of domain architecture, Ketosynthase family 3 (KS3) 4 spans 4084–4514 (DDPIAIVAMG…GTNAHVILEQ (431 aa)). Catalysis depends on for beta-ketoacyl synthase 3 activity residues Cys4261, His4396, and His4436. Positions 5561–5636 (TALLDLIRGQ…ALAEYVGSEV (76 aa)) constitute a Carrier 4 domain. The residue at position 5596 (Ser5596) is an O-(pantetheine 4'-phosphoryl)serine. A Ketosynthase family 3 (KS3) 5 domain is found at 5655-6081 (DEPVAIIGMS…GTNAHVILEQ (427 aa)). Catalysis depends on for beta-ketoacyl synthase 4 activity residues Cys5828, His5963, and His6003. The interval 6561-6685 (HPLLGAAVAL…GVLASGAATV (125 aa)) is N-terminal hotdog fold. Positions 6561–6841 (HPLLGAAVAL…LRPVSADTIA (281 aa)) constitute a PKS/mFAS DH domain. The active-site Proton acceptor; for dehydratase activity is the His6593. Positions 6700-6841 (ATAVDIDGLY…LRPVSADTIA (142 aa)) are C-terminal hotdog fold. Asp6761 serves as the catalytic Proton donor; for dehydratase activity. The Carrier 5 domain occupies 7325–7400 (QELLDFVCEH…LLAGHIGEQL (76 aa)). The residue at position 7360 (Ser7360) is an O-(pantetheine 4'-phosphoryl)serine.

As to quaternary structure, homodimer. The loading module (LM, residues 13-926) dimerizes. LM cross-links to its cognate acyl-carrier domain in a manner that seems physiological; mutation of residues in the 2 domains alters reactions efficiency in a manner predicted by the cross-linked crystal. Requires pantetheine 4'-phosphate as cofactor.

It participates in antibiotic biosynthesis. In terms of biological role, first protein in the synthesis of the 16-membered macrolide antibiotics FD-891 and FD-892. Composed of 5 modules; the first is a loading module (LM) that synthesizes a starter unit used by the first elongation module for polyketide chain elongation. The starter unit is extended by multiple rounds of addition of malonyl-CoA or methylmalonyl-CoA, and other modifications to help generate the final products. The loading module (residues 1-927, LM with an inactive acyltransferase domain) preferentially decarboxylates malonyl-GfsA acyl carrier protein of the LM (ACP-LM) over methylmalonyl-GfsA ACP-LM and has no activity on malonyl-CoA or methymalonyl-CoA. LM decarboxylates malonyl-ACP-LM better than the malonyl-ACP-1 module of GfsA (i.e. the next module in the same protein) and has no activity on other malonyl-ACP modules. The chain is Polyketide synthase GfsA from Streptomyces halstedii.